Here is a 155-residue protein sequence, read N- to C-terminus: Endoribonuclease YbeY (155 aa).

The Zn(2+) site is built by His-114, His-118, and His-124.

It belongs to the endoribonuclease YbeY family. Requires Zn(2+) as cofactor.

Its subcellular location is the cytoplasm. Functionally, single strand-specific metallo-endoribonuclease involved in late-stage 70S ribosome quality control and in maturation of the 3' terminus of the 16S rRNA. In Escherichia coli O17:K52:H18 (strain UMN026 / ExPEC), this protein is Endoribonuclease YbeY.